Consider the following 475-residue polypeptide: Ribulose bisphosphate carboxylase large chain (475 aa).

Residues 1–2 constitute a propeptide that is removed on maturation; sequence MS. The residue at position 3 (Pro-3) is an N-acetylproline. Lys-14 is modified (N6,N6,N6-trimethyllysine). Substrate is bound by residues Asn-123 and Thr-173. Residue Lys-175 is the Proton acceptor of the active site. A substrate-binding site is contributed by Lys-177. Mg(2+) contacts are provided by Lys-201, Asp-203, and Glu-204. The residue at position 201 (Lys-201) is an N6-carboxylysine. Catalysis depends on His-294, which acts as the Proton acceptor. Arg-295, His-327, and Ser-379 together coordinate substrate.

Belongs to the RuBisCO large chain family. Type I subfamily. In terms of assembly, heterohexadecamer of 8 large chains and 8 small chains; disulfide-linked. The disulfide link is formed within the large subunit homodimers. Mg(2+) serves as cofactor. The disulfide bond which can form in the large chain dimeric partners within the hexadecamer appears to be associated with oxidative stress and protein turnover.

The protein localises to the plastid. It localises to the chloroplast. It carries out the reaction 2 (2R)-3-phosphoglycerate + 2 H(+) = D-ribulose 1,5-bisphosphate + CO2 + H2O. The enzyme catalyses D-ribulose 1,5-bisphosphate + O2 = 2-phosphoglycolate + (2R)-3-phosphoglycerate + 2 H(+). RuBisCO catalyzes two reactions: the carboxylation of D-ribulose 1,5-bisphosphate, the primary event in carbon dioxide fixation, as well as the oxidative fragmentation of the pentose substrate in the photorespiration process. Both reactions occur simultaneously and in competition at the same active site. The protein is Ribulose bisphosphate carboxylase large chain of Piper cenocladum (Ant piper).